A 171-amino-acid polypeptide reads, in one-letter code: Acetyltransferase PA2271 (171 aa).

The 160-residue stretch at 3–162 (YRIRTSRDED…HEQEIGFAAD (160 aa)) folds into the N-acetyltransferase domain. Residues 84 to 86 (LSI) and 128 to 130 (PFY) contribute to the CoA site.

Catalyzes the transfer of an acetyl group from acetyl coenzyme A (AcCoA) to an acceptor substrate and releases both CoA and the acetylated product. It can use a variety of substrates including spermidine, spermine and N(8)-acetylspermidine, 7-aminocephalosporanic acid, colistin and thiamine. This Pseudomonas aeruginosa (strain ATCC 15692 / DSM 22644 / CIP 104116 / JCM 14847 / LMG 12228 / 1C / PRS 101 / PAO1) protein is Acetyltransferase PA2271.